The primary structure comprises 343 residues: Proto-oncogene serine/threonine-protein kinase mos (343 aa).

In terms of domain architecture, Protein kinase spans 63 to 339; the sequence is VCLMHRLGSG…LLQRDLKAFR (277 aa). Residues 69–77 and Lys-90 each bind ATP; that span reads LGSGGFGSV. Catalysis depends on Asp-198, which acts as the Proton acceptor.

This sequence belongs to the protein kinase superfamily. Ser/Thr protein kinase family. As to quaternary structure, interacts with MAP2K1/MEK1.

The protein resides in the cytoplasm. The enzyme catalyses L-seryl-[protein] + ATP = O-phospho-L-seryl-[protein] + ADP + H(+). It carries out the reaction L-threonyl-[protein] + ATP = O-phospho-L-threonyl-[protein] + ADP + H(+). Serine/threonine kinase involved in the regulation of MAPK signaling. Is an activator of the ERK1/2 signaling cascade playing an essential role in the stimulation of oocyte maturation. This is Proto-oncogene serine/threonine-protein kinase mos from Mus musculus (Mouse).